The primary structure comprises 203 residues: MNNNEKFIIGLGNPGKEYIQNRHNIGFLLLENFSEKYDSKFTLKNKLKSWYSEFKINNFTYRLFMPNTFMNNSGNAVRAIVDWYKIDLDRLFIIVDDIDLPLGKIRFRKKGSSGGHNGIKDIINKLQTENFNRIKIGIGSPPVNERKKTLNTISHVLGNISSKESLTLDRVYKKLIESLIELNDKNEDYIISELNSFHREENL.

TRNA is bound at residue Tyr-18. The active-site Proton acceptor is the His-23. TRNA contacts are provided by Phe-69, Asn-71, and Asn-117.

This sequence belongs to the PTH family. As to quaternary structure, monomer.

It is found in the cytoplasm. It catalyses the reaction an N-acyl-L-alpha-aminoacyl-tRNA + H2O = an N-acyl-L-amino acid + a tRNA + H(+). In terms of biological role, hydrolyzes ribosome-free peptidyl-tRNAs (with 1 or more amino acids incorporated), which drop off the ribosome during protein synthesis, or as a result of ribosome stalling. Its function is as follows. Catalyzes the release of premature peptidyl moieties from peptidyl-tRNA molecules trapped in stalled 50S ribosomal subunits, and thus maintains levels of free tRNAs and 50S ribosomes. The polypeptide is Peptidyl-tRNA hydrolase (Prochlorococcus marinus subsp. pastoris (strain CCMP1986 / NIES-2087 / MED4)).